The primary structure comprises 78 residues: uncharacterized protein (78 aa).

Helical transmembrane passes span 5 to 24 (LALL…IKLM) and 39 to 61 (LWLQ…AGFI).

It is found in the cell membrane. This is an uncharacterized protein from Bacillus subtilis (strain 168).